We begin with the raw amino-acid sequence, 118 residues long: Ribosome-binding factor A (118 aa).

Belongs to the RbfA family. In terms of assembly, monomer. Binds 30S ribosomal subunits, but not 50S ribosomal subunits or 70S ribosomes.

The protein resides in the cytoplasm. Its function is as follows. One of several proteins that assist in the late maturation steps of the functional core of the 30S ribosomal subunit. Associates with free 30S ribosomal subunits (but not with 30S subunits that are part of 70S ribosomes or polysomes). Required for efficient processing of 16S rRNA. May interact with the 5'-terminal helix region of 16S rRNA. This is Ribosome-binding factor A from Bacillus cereus (strain AH187).